A 130-amino-acid chain; its full sequence is Gloverin (130 aa).

Hemolymph.

The protein localises to the secreted. Antibacterial protein active against Gram-negative bacteria. This is Gloverin from Hyalophora cecropia (Cecropia moth).